We begin with the raw amino-acid sequence, 464 residues long: Serine carboxypeptidase-like 22 (464 aa).

Residues 1–22 (MARTHLLFLLFVLLSLATSSTS) form the signal peptide. N52, N113, and N137 each carry an N-linked (GlcNAc...) asparagine glycan. 3 disulfides stabilise this stretch: C86-C346, C247-C258, and C282-C314. Residue S179 is part of the active site. 2 N-linked (GlcNAc...) asparagine glycosylation sites follow: N290 and N335. Residues D385 and H437 contribute to the active site.

This sequence belongs to the peptidase S10 family. Expression not detected.

It is found in the secreted. In terms of biological role, probable carboxypeptidase. In Arabidopsis thaliana (Mouse-ear cress), this protein is Serine carboxypeptidase-like 22 (SCPL22).